We begin with the raw amino-acid sequence, 274 residues long: 3-methyl-2-oxobutanoate hydroxymethyltransferase (274 aa).

Asp-44 and Asp-83 together coordinate Mg(2+). 3-methyl-2-oxobutanoate is bound by residues 44-45 (DS), Asp-83, and Lys-113. Glu-115 is a Mg(2+) binding site. Catalysis depends on Glu-182, which acts as the Proton acceptor.

This sequence belongs to the PanB family. In terms of assembly, homodecamer; pentamer of dimers. Mg(2+) serves as cofactor.

The protein localises to the cytoplasm. It catalyses the reaction 3-methyl-2-oxobutanoate + (6R)-5,10-methylene-5,6,7,8-tetrahydrofolate + H2O = 2-dehydropantoate + (6S)-5,6,7,8-tetrahydrofolate. The protein operates within cofactor biosynthesis; (R)-pantothenate biosynthesis; (R)-pantoate from 3-methyl-2-oxobutanoate: step 1/2. Catalyzes the reversible reaction in which hydroxymethyl group from 5,10-methylenetetrahydrofolate is transferred onto alpha-ketoisovalerate to form ketopantoate. The sequence is that of 3-methyl-2-oxobutanoate hydroxymethyltransferase from Campylobacter jejuni subsp. jejuni serotype O:6 (strain 81116 / NCTC 11828).